The sequence spans 110 residues: Phosphoribosyl-ATP pyrophosphatase (110 aa).

Belongs to the PRA-PH family.

It is found in the cytoplasm. The catalysed reaction is 1-(5-phospho-beta-D-ribosyl)-ATP + H2O = 1-(5-phospho-beta-D-ribosyl)-5'-AMP + diphosphate + H(+). It participates in amino-acid biosynthesis; L-histidine biosynthesis; L-histidine from 5-phospho-alpha-D-ribose 1-diphosphate: step 2/9. This chain is Phosphoribosyl-ATP pyrophosphatase (hisE), found in Azotobacter chroococcum mcd 1.